A 349-amino-acid polypeptide reads, in one-letter code: S-adenosylmethionine:tRNA ribosyltransferase-isomerase (349 aa).

Belongs to the QueA family. As to quaternary structure, monomer.

It localises to the cytoplasm. The catalysed reaction is 7-aminomethyl-7-carbaguanosine(34) in tRNA + S-adenosyl-L-methionine = epoxyqueuosine(34) in tRNA + adenine + L-methionine + 2 H(+). It functions in the pathway tRNA modification; tRNA-queuosine biosynthesis. In terms of biological role, transfers and isomerizes the ribose moiety from AdoMet to the 7-aminomethyl group of 7-deazaguanine (preQ1-tRNA) to give epoxyqueuosine (oQ-tRNA). This chain is S-adenosylmethionine:tRNA ribosyltransferase-isomerase, found in Parabacteroides distasonis (strain ATCC 8503 / DSM 20701 / CIP 104284 / JCM 5825 / NCTC 11152).